A 557-amino-acid polypeptide reads, in one-letter code: Transcription factor fil1 (557 aa).

Positions 234 to 258 (SPVKRELNDSTSPSKLSESSSSLTG) are disordered. Residues 243-258 (STSPSKLSESSSSLTG) are compositionally biased toward low complexity. 2 consecutive GATA-type zinc fingers follow at residues 365–390 (CFNCGVTETPLWRRTSDKLNFLCNAC) and 419–443 (CANCSSTKTSLWRKDRHGQTVCNAC).

It localises to the nucleus. The protein localises to the cytoplasm. Activates genes required for amino acid biosynthesis and acts as a master transcriptional regulator during amino acid starvation. Binds variations of the DNA sequence 5'-GAT[AC]GC-3'. The polypeptide is Transcription factor fil1 (Schizosaccharomyces pombe (strain 972 / ATCC 24843) (Fission yeast)).